The chain runs to 456 residues: UDP-N-acetylglucosamine 1-carboxyvinyltransferase (456 aa).

Phosphoenolpyruvate is bound at residue 34-35; the sequence is KN. R104 is a binding site for UDP-N-acetyl-alpha-D-glucosamine. The active-site Proton donor is C128. C128 carries the 2-(S-cysteinyl)pyruvic acid O-phosphothioketal modification. UDP-N-acetyl-alpha-D-glucosamine-binding residues include D319 and I341.

It belongs to the EPSP synthase family. MurA subfamily.

The protein localises to the cytoplasm. It carries out the reaction phosphoenolpyruvate + UDP-N-acetyl-alpha-D-glucosamine = UDP-N-acetyl-3-O-(1-carboxyvinyl)-alpha-D-glucosamine + phosphate. Its pathway is cell wall biogenesis; peptidoglycan biosynthesis. Cell wall formation. Adds enolpyruvyl to UDP-N-acetylglucosamine. This Prochlorococcus marinus (strain AS9601) protein is UDP-N-acetylglucosamine 1-carboxyvinyltransferase.